A 253-amino-acid polypeptide reads, in one-letter code: Large ribosomal subunit protein uL4 (253 aa).

The interval 78–107 (SRAARVPHAKGGRRAHPPKPEADRSEKVNT) is disordered. The segment covering 82–94 (RVPHAKGGRRAHP) has biased composition (basic residues). Residues 95–107 (PKPEADRSEKVNT) show a composition bias toward basic and acidic residues.

It belongs to the universal ribosomal protein uL4 family. As to quaternary structure, part of the 50S ribosomal subunit.

Functionally, one of the primary rRNA binding proteins, this protein initially binds near the 5'-end of the 23S rRNA. It is important during the early stages of 50S assembly. It makes multiple contacts with different domains of the 23S rRNA in the assembled 50S subunit and ribosome. In terms of biological role, forms part of the polypeptide exit tunnel. The protein is Large ribosomal subunit protein uL4 of Methanosarcina acetivorans (strain ATCC 35395 / DSM 2834 / JCM 12185 / C2A).